A 202-amino-acid chain; its full sequence is Small ribosomal subunit protein uS4 (202 aa).

One can recognise an S4 RNA-binding domain in the interval 91–157 (CRLDNVVYRA…TPFIVARETH (67 aa)).

Belongs to the universal ribosomal protein uS4 family. Part of the 30S ribosomal subunit. Contacts protein S5. The interaction surface between S4 and S5 is involved in control of translational fidelity.

In terms of biological role, one of the primary rRNA binding proteins, it binds directly to 16S rRNA where it nucleates assembly of the body of the 30S subunit. Functionally, with S5 and S12 plays an important role in translational accuracy. In Nocardioides sp. (strain ATCC BAA-499 / JS614), this protein is Small ribosomal subunit protein uS4.